Here is a 355-residue protein sequence, read N- to C-terminus: 4-hydroxy-3-methylbut-2-en-1-yl diphosphate synthase (flavodoxin) (355 aa).

Positions 266, 269, 301, and 308 each coordinate [4Fe-4S] cluster.

Belongs to the IspG family. [4Fe-4S] cluster is required as a cofactor.

It carries out the reaction (2E)-4-hydroxy-3-methylbut-2-enyl diphosphate + oxidized [flavodoxin] + H2O + 2 H(+) = 2-C-methyl-D-erythritol 2,4-cyclic diphosphate + reduced [flavodoxin]. The protein operates within isoprenoid biosynthesis; isopentenyl diphosphate biosynthesis via DXP pathway; isopentenyl diphosphate from 1-deoxy-D-xylulose 5-phosphate: step 5/6. In terms of biological role, converts 2C-methyl-D-erythritol 2,4-cyclodiphosphate (ME-2,4cPP) into 1-hydroxy-2-methyl-2-(E)-butenyl 4-diphosphate. This is 4-hydroxy-3-methylbut-2-en-1-yl diphosphate synthase (flavodoxin) from Caldanaerobacter subterraneus subsp. tengcongensis (strain DSM 15242 / JCM 11007 / NBRC 100824 / MB4) (Thermoanaerobacter tengcongensis).